The following is a 514-amino-acid chain: ATP synthase subunit alpha (514 aa).

170-177 provides a ligand contact to ATP; the sequence is GDRQIGKT.

This sequence belongs to the ATPase alpha/beta chains family. In terms of assembly, F-type ATPases have 2 components, CF(1) - the catalytic core - and CF(0) - the membrane proton channel. CF(1) has five subunits: alpha(3), beta(3), gamma(1), delta(1), epsilon(1). CF(0) has three main subunits: a(1), b(2) and c(9-12). The alpha and beta chains form an alternating ring which encloses part of the gamma chain. CF(1) is attached to CF(0) by a central stalk formed by the gamma and epsilon chains, while a peripheral stalk is formed by the delta and b chains.

It is found in the cell inner membrane. The enzyme catalyses ATP + H2O + 4 H(+)(in) = ADP + phosphate + 5 H(+)(out). Produces ATP from ADP in the presence of a proton gradient across the membrane. The alpha chain is a regulatory subunit. This Pseudomonas putida (strain ATCC 47054 / DSM 6125 / CFBP 8728 / NCIMB 11950 / KT2440) protein is ATP synthase subunit alpha.